Reading from the N-terminus, the 141-residue chain is Large ribosomal subunit protein uL16 (141 aa).

Residues 1-16 (MLMPRKPPKGFRKPHH) are compositionally biased toward basic residues. The segment at 1-27 (MLMPRKPPKGFRKPHHPDRSGASKGGN) is disordered.

Belongs to the universal ribosomal protein uL16 family. As to quaternary structure, part of the 50S ribosomal subunit.

In terms of biological role, binds 23S rRNA and is also seen to make contacts with the A and possibly P site tRNAs. In Salinispora arenicola (strain CNS-205), this protein is Large ribosomal subunit protein uL16.